The sequence spans 281 residues: Large ribosomal subunit protein uL2 (281 aa).

Positions 215–281 (LGRRPHTRGV…RRNNRKDSKK (67 aa)) are disordered. Basic and acidic residues predominate over residues 258-269 (KTRDNKSTDKFI). A compositionally biased stretch (basic residues) spans 270–281 (VRRRNNRKDSKK).

Belongs to the universal ribosomal protein uL2 family. As to quaternary structure, part of the 50S ribosomal subunit. Forms a bridge to the 30S subunit in the 70S ribosome.

In terms of biological role, one of the primary rRNA binding proteins. Required for association of the 30S and 50S subunits to form the 70S ribosome, for tRNA binding and peptide bond formation. It has been suggested to have peptidyltransferase activity; this is somewhat controversial. Makes several contacts with the 16S rRNA in the 70S ribosome. The polypeptide is Large ribosomal subunit protein uL2 (Pelagibacter ubique (strain HTCC1062)).